The primary structure comprises 213 residues: Ras-related protein Rab-4B (213 aa).

Ala2 carries the post-translational modification N-acetylalanine. Residues Gly18, Thr19, Gly20, Lys21, Ser22, and Cys23 each contribute to the GDP site. The GTP site is built by Gly18, Thr19, Gly20, Lys21, Ser22, Cys23, Ser37, His39, and Thr40. Mg(2+) is bound at residue Ser22. The short motif at 39–44 (HTIGVE) is the Switch 1 element. Residues Thr40 and Asp63 each coordinate Mg(2+). The short motif at 65-74 (AGQERFRSVT) is the Switch 2 element. Gly66 is a binding site for GTP. The residue at position 67 (Gln67) is a 5-glutamyl serotonin. Residues Asn121, Lys122, Asp124, Ala152, and Leu153 each contribute to the GDP site. Residues Asn121, Lys122, Asp124, Ala152, and Leu153 each contribute to the GTP site. 2 positions are modified to phosphoserine: Ser185 and Ser193. Residues Cys211 and Cys213 are each lipidated (S-geranylgeranyl cysteine). Cys213 carries the post-translational modification Cysteine methyl ester.

The protein belongs to the small GTPase superfamily. Rab family. As to quaternary structure, interacts (GTP-bound form) with RUFY1; the interaction allows endosomal tethering and fusion. The cofactor is Mg(2+). Post-translationally, serotonylation of Gln-67 by TGM2 during activation and aggregation of platelets leads to constitutive activation of GTPase activity.

Its subcellular location is the cell membrane. The protein resides in the early endosome membrane. It carries out the reaction GTP + H2O = GDP + phosphate + H(+). Regulated by guanine nucleotide exchange factors (GEFs) which promote the exchange of bound GDP for free GTP. Regulated by GTPase activating proteins (GAPs) which increase the GTP hydrolysis activity. Inhibited by GDP dissociation inhibitors (GDIs). In terms of biological role, the small GTPases Rab are key regulators of intracellular membrane trafficking, from the formation of transport vesicles to their fusion with membranes. Rabs cycle between an inactive GDP-bound form and an active GTP-bound form that is able to recruit to membranes different set of downstream effectors directly responsible for vesicle formation, movement, tethering and fusion. RAB4B mediates endosomal tethering and fusion through the interaction with RUFY1 and RAB14. Acts as a regulator of platelet alpha-granule release during activation and aggregation of platelets. In Mus musculus (Mouse), this protein is Ras-related protein Rab-4B.